We begin with the raw amino-acid sequence, 485 residues long: Cysteine--tRNA ligase (485 aa).

C27 serves as a coordination point for Zn(2+). A 'HIGH' region motif is present at residues 29–39 (ITAYDLCHIGH). The Zn(2+) site is built by C208, H233, and E237. Residues 265 to 269 (KMSKS) carry the 'KMSKS' region motif. K268 is a binding site for ATP.

This sequence belongs to the class-I aminoacyl-tRNA synthetase family. Monomer. It depends on Zn(2+) as a cofactor.

The protein resides in the cytoplasm. It carries out the reaction tRNA(Cys) + L-cysteine + ATP = L-cysteinyl-tRNA(Cys) + AMP + diphosphate. The chain is Cysteine--tRNA ligase from Nitratidesulfovibrio vulgaris (strain DSM 19637 / Miyazaki F) (Desulfovibrio vulgaris).